The following is a 520-amino-acid chain: Ribonuclease Y (520 aa).

The chain crosses the membrane as a helical span at residues 4–24; that stretch reads VSGILLVLIGLLAGVGLGVLL. In terms of domain architecture, KH spans 210-270; it reads TVSVVNLPNE…VRREVARVSL (61 aa). Positions 336-429 constitute an HD domain; sequence VLQHSREVAF…VQAADALSGA (94 aa).

The protein belongs to the RNase Y family.

It localises to the cell membrane. Functionally, endoribonuclease that initiates mRNA decay. This is Ribonuclease Y from Syntrophobacter fumaroxidans (strain DSM 10017 / MPOB).